The following is a 149-amino-acid chain: UPF0178 protein SERP0336 (149 aa).

This sequence belongs to the UPF0178 family.

In Staphylococcus epidermidis (strain ATCC 35984 / DSM 28319 / BCRC 17069 / CCUG 31568 / BM 3577 / RP62A), this protein is UPF0178 protein SERP0336.